Reading from the N-terminus, the 732-residue chain is uncharacterized protein (732 aa).

Belongs to the mimivirus L137 family.

This is an uncharacterized protein from Acanthamoeba polyphaga mimivirus (APMV).